The following is a 590-amino-acid chain: Aspartate--tRNA(Asp/Asn) ligase (590 aa).

Glutamate 182 provides a ligand contact to L-aspartate. The segment at 206-209 (QLFK) is aspartate. Arginine 228 serves as a coordination point for L-aspartate. ATP is bound by residues 228-230 (RDE) and glutamine 237. Histidine 454 is a binding site for L-aspartate. Position 488 (glutamate 488) interacts with ATP. Arginine 495 provides a ligand contact to L-aspartate. 540 to 543 (GLDR) is a binding site for ATP.

It belongs to the class-II aminoacyl-tRNA synthetase family. Type 1 subfamily. Homodimer.

The protein resides in the cytoplasm. It carries out the reaction tRNA(Asx) + L-aspartate + ATP = L-aspartyl-tRNA(Asx) + AMP + diphosphate. Functionally, aspartyl-tRNA synthetase with relaxed tRNA specificity since it is able to aspartylate not only its cognate tRNA(Asp) but also tRNA(Asn). Reaction proceeds in two steps: L-aspartate is first activated by ATP to form Asp-AMP and then transferred to the acceptor end of tRNA(Asp/Asn). In Halothermothrix orenii (strain H 168 / OCM 544 / DSM 9562), this protein is Aspartate--tRNA(Asp/Asn) ligase.